We begin with the raw amino-acid sequence, 335 residues long: Tetraacyldisaccharide 4'-kinase (335 aa).

Position 58-65 (58-65 (TAGGSGKT)) interacts with ATP.

This sequence belongs to the LpxK family.

It carries out the reaction a lipid A disaccharide + ATP = a lipid IVA + ADP + H(+). The protein operates within glycolipid biosynthesis; lipid IV(A) biosynthesis; lipid IV(A) from (3R)-3-hydroxytetradecanoyl-[acyl-carrier-protein] and UDP-N-acetyl-alpha-D-glucosamine: step 6/6. Functionally, transfers the gamma-phosphate of ATP to the 4'-position of a tetraacyldisaccharide 1-phosphate intermediate (termed DS-1-P) to form tetraacyldisaccharide 1,4'-bis-phosphate (lipid IVA). The polypeptide is Tetraacyldisaccharide 4'-kinase (Shewanella frigidimarina (strain NCIMB 400)).